Consider the following 156-residue polypeptide: Longistatin (156 aa).

The N-terminal stretch at 1-21 is a signal peptide; sequence MTHRRLLWALCVAALLGVVAA. EF-hand domains lie at 70–105 and 123–156; these read SQDE…TNHH and DIAS…TNQI. Positions 83, 85, 87, 89, 94, 135, 137, 139, 141, and 146 each coordinate Ca(2+).

Interacts with host fibrin. Interacts with human RAGE/AGER. In terms of tissue distribution, saliva (at protein level). Salivary gland (at protein level). Not detected in midgut, ovary, trachea, Malpighian tubule system, synganglion and cuticle.

The protein resides in the secreted. It is found in the cytoplasm. Its activity is regulated as follows. Resistant to inhibition by host SERPINE1. Inhibited by PMSF, aprotinin, antipain and leupeptin. Inhibited by Zn(2+). In terms of biological role, anticoagulant and fibrinolytic protease that modulates blood feeding of ticks on vertebrate hosts. Degrades host fibrinogen and delays fibrin clot formation. Promotes lysis of fibrin clots in the host by activating host plasminogen in the presence of soluble fibrin. Binds Ca(2+). Hydrolyzes serine protease-specific substrates. Required for the formation of a blood pool, an accumulation of blood and tissue fluid developed at the tick's feeding site. Blocks activation of host AGER/RAGE. Reduces AGER/RAGE-dependent production of reactive oxygen species (ROS) in human endothelial cells. Prevents AGER/RAGE-dependent activation of NF-kappa-B and suppresses expression of adhesion molecules, such as VCAM1, ICAM1 and SELE, and secretion of cytokines, such as CSF3/GCSF and TGF-beta, in human endothelial cells. Suppresses RAGE/AGER-mediated migration of mouse peritoneal resident cells. Reduces AGER/RAGE-mediated inflammation in mice tissues. This is Longistatin from Haemaphysalis longicornis (Bush tick).